The chain runs to 336 residues: Adenylosuccinate synthetase (336 aa).

Residues 12-18 and 42-44 each bind GTP; these read GDEGKGK and GHS. D13 acts as the Proton acceptor in catalysis. The Mg(2+) site is built by D13 and G42. IMP contacts are provided by residues 13–16, 40–43, T127, R141, Q179, T194, and R256; these read DEGK and NAGH. Catalysis depends on H43, which acts as the Proton donor. Position 252 to 258 (252 to 258) interacts with substrate; sequence TVTGRRR. Residues R258, 284–286, and 324–326 contribute to the GTP site; these read CLD and STG.

It belongs to the adenylosuccinate synthetase family. As to quaternary structure, homodimer. The cofactor is Mg(2+).

The protein resides in the cytoplasm. It carries out the reaction IMP + L-aspartate + GTP = N(6)-(1,2-dicarboxyethyl)-AMP + GDP + phosphate + 2 H(+). It participates in purine metabolism; AMP biosynthesis via de novo pathway; AMP from IMP: step 1/2. Plays an important role in the de novo pathway of purine nucleotide biosynthesis. Catalyzes the first committed step in the biosynthesis of AMP from IMP. This chain is Adenylosuccinate synthetase, found in Methanococcus aeolicus (strain ATCC BAA-1280 / DSM 17508 / OCM 812 / Nankai-3).